An 89-amino-acid chain; its full sequence is Cornifin-A (89 aa).

The tract at residues 1–29 (MNSQQQKQPCTPPPQPQQQQVKQPCQPPP) is disordered. Repeat copies occupy residues 3–14 (SQQQKQPCTPPP), 18–29 (QQQVKQPCQPPP), 31–38 (EPCIPKTK), 39–46 (EPCHPKVP), 47–54 (EPCHPKVP), 55–62 (EPCQPKVP), 63–70 (EPCQPKVP), and 71–78 (EPCPSTVT). The segment at 3 to 29 (SQQQKQPCTPPPQPQQQQVKQPCQPPP) is 2 X 12 AA approximate repeats. The interval 31 to 78 (EPCIPKTKEPCHPKVPEPCHPKVPEPCQPKVPEPCQPKVPEPCPSTVT) is 6 X 8 AA approximate tandem repeats. Positions 68–89 (KVPEPCPSTVTPAPAQQKTKQK) are disordered. Over residues 75–89 (STVTPAPAQQKTKQK) the composition is skewed to polar residues.

The protein belongs to the cornifin (SPRR) family.

Its subcellular location is the cytoplasm. In terms of biological role, cross-linked envelope protein of keratinocytes. It is a keratinocyte protein that first appears in the cell cytosol, but ultimately becomes cross-linked to membrane proteins by transglutaminase. All that results in the formation of an insoluble envelope beneath the plasma membrane. This Homo sapiens (Human) protein is Cornifin-A (SPRR1A).